Reading from the N-terminus, the 373-residue chain is ATP phosphoribosyltransferase regulatory subunit (373 aa).

It belongs to the class-II aminoacyl-tRNA synthetase family. HisZ subfamily. Heteromultimer composed of HisG and HisZ subunits.

It localises to the cytoplasm. It participates in amino-acid biosynthesis; L-histidine biosynthesis; L-histidine from 5-phospho-alpha-D-ribose 1-diphosphate: step 1/9. Required for the first step of histidine biosynthesis. May allow the feedback regulation of ATP phosphoribosyltransferase activity by histidine. The polypeptide is ATP phosphoribosyltransferase regulatory subunit (Chelativorans sp. (strain BNC1)).